A 539-amino-acid polypeptide reads, in one-letter code: Berberine bridge enzyme-like 21 (539 aa).

An N-terminal signal peptide occupies residues 1 to 26; sequence MIATQTFVSVFFFVFFLVSLPFFSSA. Cysteines 41 and 104 form a disulfide. Residue N79 is glycosylated (N-linked (GlcNAc...) asparagine). The FAD-binding PCMH-type domain maps to 82–256; that stretch reads STPKPAIIVT…LGYKVKLVPV (175 aa). The segment at residues 119–181 is a cross-link (6-(S-cysteinyl)-8alpha-(pros-histidyl)-FAD (His-Cys)); sequence HDYEGLSYIS…KVHGFPAGVC (63 aa). An N-linked (GlcNAc...) asparagine glycan is attached at N340.

Belongs to the oxygen-dependent FAD-linked oxidoreductase family. Requires FAD as cofactor. Post-translationally, the FAD cofactor is bound via a bicovalent 6-S-cysteinyl, 8alpha-N1-histidyl FAD linkage.

The protein resides in the secreted. It is found in the cell wall. In Arabidopsis thaliana (Mouse-ear cress), this protein is Berberine bridge enzyme-like 21.